The chain runs to 1133 residues: Eukaryotic translation initiation factor 3 subunit A (1133 aa).

The region spanning 317-498 (IQRMTSHVLI…HCVHFGTDLS (182 aa)) is the PCI domain. Coiled coils occupy residues 573 to 700 (KKIE…YFER) and 784 to 886 (EEER…EADS). Residues 810–893 (KEEERRRAEE…ADSWRDRRGG (84 aa)) show a composition bias toward basic and acidic residues. The disordered stretch occupies residues 810–1133 (KEEERRRAEE…DGWTDVKHHR (324 aa)). A compositionally biased stretch (low complexity) spans 895 to 909 (APAAAAQPNPAAQEA). Composition is skewed to basic and acidic residues over residues 920-944 (GARE…RDVR), 954-1081 (VERR…DSAW), and 1097-1117 (TRQD…KEAR).

The protein belongs to the eIF-3 subunit A family. Component of the eukaryotic translation initiation factor 3 (eIF-3) complex.

It is found in the cytoplasm. In terms of biological role, RNA-binding component of the eukaryotic translation initiation factor 3 (eIF-3) complex, which is involved in protein synthesis of a specialized repertoire of mRNAs and, together with other initiation factors, stimulates binding of mRNA and methionyl-tRNAi to the 40S ribosome. The eIF-3 complex specifically targets and initiates translation of a subset of mRNAs involved in cell proliferation. In Aedes aegypti (Yellowfever mosquito), this protein is Eukaryotic translation initiation factor 3 subunit A.